Consider the following 257-residue polypeptide: 3-methyl-2-oxobutanoate hydroxymethyltransferase (257 aa).

Residues Asp42 and Asp86 each coordinate Mg(2+). 3-methyl-2-oxobutanoate contacts are provided by residues 42-43, Asp86, and Lys116; that span reads DS. Glu118 lines the Mg(2+) pocket. Catalysis depends on Glu185, which acts as the Proton acceptor.

Belongs to the PanB family. In terms of assembly, homodecamer; pentamer of dimers. Mg(2+) serves as cofactor.

The protein resides in the cytoplasm. The enzyme catalyses 3-methyl-2-oxobutanoate + (6R)-5,10-methylene-5,6,7,8-tetrahydrofolate + H2O = 2-dehydropantoate + (6S)-5,6,7,8-tetrahydrofolate. Its pathway is cofactor biosynthesis; (R)-pantothenate biosynthesis; (R)-pantoate from 3-methyl-2-oxobutanoate: step 1/2. Its function is as follows. Catalyzes the reversible reaction in which hydroxymethyl group from 5,10-methylenetetrahydrofolate is transferred onto alpha-ketoisovalerate to form ketopantoate. In Prochlorococcus marinus (strain AS9601), this protein is 3-methyl-2-oxobutanoate hydroxymethyltransferase.